The chain runs to 371 residues: Assembly protein G7 (371 aa).

It belongs to the chordopoxvirinae G7 family. In terms of assembly, part of a complex composed of A30, G7, F10 kinase, A15, D2, D3, and J1. In terms of processing, phosphorylated on serines by F10 kinase, phosphorylation state is regulated by H1 phosphatase. Post-translationally, undergoes proteolytic processing during morphogenesis, probably required for the transformation of immature virions (IV) into mature virions (MV).

It localises to the host cytoplasm. Its subcellular location is the virion. Late protein which is a part of a large complex required for early virion morphogenesis. This complex participates in the formation of virosomes and the incorporation of virosomal contents into nascent immature virions. The sequence is that of Assembly protein G7 from Homo sapiens (Human).